The chain runs to 156 residues: Cytochrome c-type biogenesis protein CcmE 1 (156 aa).

The Cytoplasmic portion of the chain corresponds to 1-8; it reads MNATRKQR. The helical; Signal-anchor for type II membrane protein transmembrane segment at 9 to 29 threads the bilayer; that stretch reads LWLVIGVLAAAALAVTLIVFA. Residues 30 to 156 are Periplasmic-facing; it reads LQRNMSYLFT…ATVAPLTAPR (127 aa). The heme site is built by histidine 123 and tyrosine 127.

Belongs to the CcmE/CycJ family.

The protein localises to the cell inner membrane. Its function is as follows. Heme chaperone required for the biogenesis of c-type cytochromes. Transiently binds heme delivered by CcmC and transfers the heme to apo-cytochromes in a process facilitated by CcmF and CcmH. The chain is Cytochrome c-type biogenesis protein CcmE 1 from Xanthomonas axonopodis pv. citri (strain 306).